Consider the following 912-residue polypeptide: Multiple C2 and transmembrane domain-containing protein (912 aa).

Residues M1–P33 show a composition bias toward low complexity. 2 disordered regions span residues M1–K80 and S145–S165. A compositionally biased stretch (polar residues) spans P38–R49. C2 domains are found at residues Q218–L337, R371–L493, and E522–D637. Ca(2+) contacts are provided by D252, D258, D305, D307, and D313. 4 residues coordinate Ca(2+): D553, D559, D605, and D607. The next 2 helical transmembrane spans lie at I729–L749 and L826–L846. Positions N887–S912 are disordered.

Ca(2+) serves as cofactor. In terms of tissue distribution, motor neurons (at protein level).

The protein resides in the endoplasmic reticulum membrane. Functionally, calcium sensor which is essential for the stabilization of normal baseline neurotransmitter release and for the induction and long-term maintenance of presynaptic homeostatic plasticity. This Drosophila melanogaster (Fruit fly) protein is Multiple C2 and transmembrane domain-containing protein.